A 349-amino-acid polypeptide reads, in one-letter code: UDP-3-O-acylglucosamine N-acyltransferase (349 aa).

Catalysis depends on His-248, which acts as the Proton acceptor.

It belongs to the transferase hexapeptide repeat family. LpxD subfamily. Homotrimer.

The catalysed reaction is a UDP-3-O-[(3R)-3-hydroxyacyl]-alpha-D-glucosamine + a (3R)-hydroxyacyl-[ACP] = a UDP-2-N,3-O-bis[(3R)-3-hydroxyacyl]-alpha-D-glucosamine + holo-[ACP] + H(+). The protein operates within bacterial outer membrane biogenesis; LPS lipid A biosynthesis. Functionally, catalyzes the N-acylation of UDP-3-O-acylglucosamine using 3-hydroxyacyl-ACP as the acyl donor. Is involved in the biosynthesis of lipid A, a phosphorylated glycolipid that anchors the lipopolysaccharide to the outer membrane of the cell. The sequence is that of UDP-3-O-acylglucosamine N-acyltransferase from Colwellia psychrerythraea (strain 34H / ATCC BAA-681) (Vibrio psychroerythus).